A 183-amino-acid chain; its full sequence is Endoribonuclease YbeY (183 aa).

Zn(2+) is bound by residues histidine 143, histidine 147, and histidine 153.

The protein belongs to the endoribonuclease YbeY family. It depends on Zn(2+) as a cofactor.

The protein localises to the cytoplasm. Its function is as follows. Single strand-specific metallo-endoribonuclease involved in late-stage 70S ribosome quality control and in maturation of the 3' terminus of the 16S rRNA. This Rickettsia bellii (strain RML369-C) protein is Endoribonuclease YbeY.